The sequence spans 112 residues: MKKIEAIIRPFKLNEVKLALVKGGIGGMTVVKVSGFGRQKGQTERYKGSEYSIDIIDKIKIEIIVSDDKVNSITEIIIKTAKTGEIGDGKIFISDVEQVIRIRTNDLNSAAL.

O-UMP-tyrosine is present on Y51.

It belongs to the P(II) protein family. Homotrimer.

It localises to the plastid. It is found in the chloroplast. Its function is as follows. P-II indirectly controls the transcription of the glutamine synthetase gene (glnA). P-II prevents NR-II-catalyzed conversion of NR-I to NR-I-phosphate, the transcriptional activator of glnA. When P-II is uridylylated to P-II-UMP, these events are reversed. When the ratio of Gln to 2-ketoglutarate decreases, P-II is uridylylated to P-II-UMP, which causes the deadenylation of glutamine synthetase, so activating the enzyme. This Porphyra purpurea (Red seaweed) protein is Nitrogen regulatory protein P-II (glnB).